The sequence spans 1244 residues: DNA polymerase beta (1244 aa).

Tandem repeats lie at residues 1069-1072 (AGNP), 1073-1076 (AGNP), 1077-1080 (AGNP), 1081-1084 (AGNP), 1085-1088 (AGNP), 1089-1092 (AGNP), 1093-1096 (AGNP), 1097-1100 (AGNP), 1101-1104 (AGNP), 1105-1108 (AGNP), 1109-1112 (AGNP), 1113-1116 (AGNP), and 1117-1120 (AGNP). Residues 1069-1118 (AGNPAGNPAGNPAGNPAGNPAGNPAGNPAGNPAGNPAGNPAGNPAGNPAG) form a disordered region. The 13 X 4 AA tandem repeats of A-G-N-P stretch occupies residues 1069 to 1120 (AGNPAGNPAGNPAGNPAGNPAGNPAGNPAGNPAGNPAGNPAGNPAGNPAGNP).

This sequence belongs to the DNA polymerase type-B family.

It catalyses the reaction DNA(n) + a 2'-deoxyribonucleoside 5'-triphosphate = DNA(n+1) + diphosphate. DNA-directed DNA polymerase involved in viral DNA replication. This African swine fever virus (isolate Pig/Portugal/Lis 60/1960) (ASFV) protein is DNA polymerase beta (DPOL).